A 146-amino-acid chain; its full sequence is Snaclec coagulation factor IX/factor X-binding protein subunit B2 (146 aa).

An N-terminal signal peptide occupies residues 1 to 23 (MGRLIFVSFGLLVVFLSLSGTAA). 3 disulfides stabilise this stretch: Cys25-Cys36, Cys53-Cys142, and Cys119-Cys134. One can recognise a C-type lectin domain in the interval 32–143 (YEGHCYKPFN…CRMMANFVCE (112 aa)).

Belongs to the snaclec family. In terms of assembly, heterodimer of subunits A and B2; disulfide-linked. Expressed by the venom gland.

Its subcellular location is the secreted. Anticoagulant protein which binds to the gamma-carboxyglutamic acid-domain regions of factors IX (F9) and factor X (F10) in the presence of calcium with a 1 to 1 stoichiometry. In Trimeresurus stejnegeri (Chinese green tree viper), this protein is Snaclec coagulation factor IX/factor X-binding protein subunit B2.